A 505-amino-acid polypeptide reads, in one-letter code: L-arabinose isomerase (505 aa).

The Mn(2+) site is built by E308, E335, H352, and H453.

The protein belongs to the arabinose isomerase family. The cofactor is Mn(2+).

The catalysed reaction is beta-L-arabinopyranose = L-ribulose. The protein operates within carbohydrate degradation; L-arabinose degradation via L-ribulose; D-xylulose 5-phosphate from L-arabinose (bacterial route): step 1/3. Functionally, catalyzes the conversion of L-arabinose to L-ribulose. The chain is L-arabinose isomerase from Bifidobacterium animalis subsp. lactis (strain AD011).